Here is a 582-residue protein sequence, read N- to C-terminus: MESVKQRILAPGKEGIKNFAGKSLGQIYRVLEKKQDNRETIELTEDGKPLEVPEKKAPLCDCTCFGLPRRYIIAIMSGLGFCISFGIRCNLGVAIVDMVNNSTIHRGGKVIKEKAKFNWDPETVGMIHGSFFWGYIITQIPGGYIASRLAANRVFGAAILLTSTLNMLIPSAARVHYGCVIFVRILQGLVEGVTYPACHGIWSKWAPPLERSRLATTSFCGSYAGAVIAMPLAGILVQYTGWSSVFYVYGSFGMVWYMFWLLVSYESPAKHPTITDEERRYIEESIGESANLLGAMEKFKTPWRKFFTSMPVYAIIVANFCRSWTFYLLLISQPAYFEEVFGFEISKVGMLSAVPHLVMTIIVPIGGQIADFLRSKQILSTTTVRKIMNCGGFGMEATLLLVVGYSHTRGVAISFLVLAVGFSGFAISGFNVNHLDIAPRYASILMGISDGVGTLSGMVCPIIVGAMTKNKSREEWQYVFLIAALVHYGGVIFYALFASGEKQPWADPEETSEEKCGFIHEDELDEETGDITQNYINYGTTKSYGATSQENGGWPNGWEKKEEFVQEGAQDAYTYKDRDDYS.

Topologically, residues 1-71 are cytoplasmic; the sequence is MESVKQRILA…CTCFGLPRRY (71 aa). A helical membrane pass occupies residues 72–92; it reads IIAIMSGLGFCISFGIRCNLG. Topologically, residues 93–125 are vesicular; it reads VAIVDMVNNSTIHRGGKVIKEKAKFNWDPETVG. N-linked (GlcNAc...) asparagine glycosylation is found at Asn-100 and Asn-101. Residues 126–146 traverse the membrane as a helical segment; the sequence is MIHGSFFWGYIITQIPGGYIA. Residues 147–148 lie on the Cytoplasmic side of the membrane; the sequence is SR. The chain crosses the membrane as a helical span at residues 149–169; the sequence is LAANRVFGAAILLTSTLNMLI. The Vesicular portion of the chain corresponds to 170-177; sequence PSAARVHY. The chain crosses the membrane as a helical span at residues 178-198; the sequence is GCVIFVRILQGLVEGVTYPAC. The Cytoplasmic segment spans residues 199–216; that stretch reads HGIWSKWAPPLERSRLAT. The chain crosses the membrane as a helical span at residues 217–237; that stretch reads TSFCGSYAGAVIAMPLAGILV. Over 238–244 the chain is Vesicular; that stretch reads QYTGWSS. A helical membrane pass occupies residues 245–265; it reads VFYVYGSFGMVWYMFWLLVSY. Residues 266–310 lie on the Cytoplasmic side of the membrane; the sequence is ESPAKHPTITDEERRYIEESIGESANLLGAMEKFKTPWRKFFTSM. The helical transmembrane segment at 311-331 threads the bilayer; that stretch reads PVYAIIVANFCRSWTFYLLLI. The Vesicular portion of the chain corresponds to 332–349; the sequence is SQPAYFEEVFGFEISKVG. Residues 350 to 370 form a helical membrane-spanning segment; it reads MLSAVPHLVMTIIVPIGGQIA. Over 371-386 the chain is Cytoplasmic; the sequence is DFLRSKQILSTTTVRK. A helical transmembrane segment spans residues 387 to 407; sequence IMNCGGFGMEATLLLVVGYSH. Residues 408–409 are Vesicular-facing; that stretch reads TR. The helical transmembrane segment at 410–430 threads the bilayer; it reads GVAISFLVLAVGFSGFAISGF. Topologically, residues 431-443 are cytoplasmic; it reads NVNHLDIAPRYAS. The chain crosses the membrane as a helical span at residues 444–464; that stretch reads ILMGISDGVGTLSGMVCPIIV. The Vesicular segment spans residues 465 to 477; it reads GAMTKNKSREEWQ. Asn-470 carries N-linked (GlcNAc...) asparagine glycosylation. The helical transmembrane segment at 478–498 threads the bilayer; the sequence is YVFLIAALVHYGGVIFYALFA. Topologically, residues 499 to 582 are cytoplasmic; it reads SGEKQPWADP…YTYKDRDDYS (84 aa).

This sequence belongs to the major facilitator superfamily. Sodium/anion cotransporter family. VGLUT subfamily. In terms of tissue distribution, expressed in brain. Expressed in hippocampal neurons (at protein level).

Its subcellular location is the cytoplasmic vesicle. It localises to the secretory vesicle. The protein localises to the synaptic vesicle membrane. It is found in the synapse. The protein resides in the synaptosome. Its subcellular location is the cell membrane. It catalyses the reaction L-glutamate(out) = L-glutamate(in). It carries out the reaction K(+)(in) + H(+)(out) = K(+)(out) + H(+)(in). The catalysed reaction is 3 Na(+)(out) + phosphate(out) = 3 Na(+)(in) + phosphate(in). The enzyme catalyses phosphate(in) = phosphate(out). It catalyses the reaction chloride(in) = chloride(out). With respect to regulation, chloride channel activity is allosterically activated by lumenal H(+) and Cl(-) leading to synaptic vesicles acidification. The L-glutamate transport activity is allosterically activated by lumenal H(+) and Cl(-). The allosteric requirement for H(+) efficiently prevents non-vesicular efflux across the plasma membrane. The L-glutamate uniporter activity exhibits a biphasic dependence on chloride concentration. Multifunctional transporter that transports L-glutamate as well as multiple ions such as chloride, proton, potassium, sodium and phosphate. At the synaptic vesicle membrane, mainly functions as a uniporter which transports preferentially L-glutamate but also, phosphate from the cytoplasm into synaptic vesicles at presynaptic nerve terminals of excitatory neural cells. The L-glutamate or phosphate uniporter activity is electrogenic and is driven by the proton electrochemical gradient, mainly by the electrical gradient established by the vacuolar H(+)-ATPase across the synaptic vesicle membrane. In addition, functions as a chloride channel that allows a chloride permeation through the synaptic vesicle membrane therefore affects the proton electrochemical gradient and promotes synaptic vesicles acidification. Moreover, functions as a vesicular K(+)/H(+) antiport allowing to maintain the electrical gradient and to decrease chemical gradient and therefore sustain vesicular glutamate uptake. The vesicular H(+)/H(+) antiport activity is electroneutral. At the plasma membrane, following exocytosis, functions as a symporter of Na(+) and phosphate from the extracellular space to the cytoplasm allowing synaptic phosphate homeostasis regulation. The symporter activity is driven by an inside negative membrane potential and is electrogenic. Also involved in the regulation of retinal hyaloid vessel regression during postnatal development. May also play a role in the endocrine glutamatergic system of other tissues such as pineal gland and pancreas. In Mus musculus (Mouse), this protein is Vesicular glutamate transporter 2.